We begin with the raw amino-acid sequence, 253 residues long: Glucosamine-6-phosphate deaminase (253 aa).

D65 functions as the Proton acceptor; for enolization step in the catalytic mechanism. Residue N133 is the For ring-opening step of the active site. Catalysis depends on H135, which acts as the Proton acceptor; for ring-opening step. The active-site For ring-opening step is the E140.

Belongs to the glucosamine/galactosamine-6-phosphate isomerase family. NagB subfamily.

The enzyme catalyses alpha-D-glucosamine 6-phosphate + H2O = beta-D-fructose 6-phosphate + NH4(+). It participates in amino-sugar metabolism; N-acetylneuraminate degradation; D-fructose 6-phosphate from N-acetylneuraminate: step 5/5. Functionally, catalyzes the reversible isomerization-deamination of glucosamine 6-phosphate (GlcN6P) to form fructose 6-phosphate (Fru6P) and ammonium ion. This chain is Glucosamine-6-phosphate deaminase, found in Corynebacterium efficiens (strain DSM 44549 / YS-314 / AJ 12310 / JCM 11189 / NBRC 100395).